The primary structure comprises 103 residues: 4-amino-4-deoxychorismate mutase (103 aa).

One can recognise a Chorismate mutase domain in the interval 1 to 92 (MTEQNELQRL…EMCRVEDLVM (92 aa)).

The catalysed reaction is 4-amino-4-deoxychorismate = 4-amino-4-deoxyprephenate. It functions in the pathway antibiotic biosynthesis. In terms of biological role, involved in chloramphenicol biosynthesis. Probably catalyzes the conversion of 4-amino-4-deoxychorismate to 4-amino-4-deoxyprephenate. This is 4-amino-4-deoxychorismate mutase from Streptomyces venezuelae (strain ATCC 10712 / CBS 650.69 / DSM 40230 / JCM 4526 / NBRC 13096 / PD 04745).